The sequence spans 183 residues: dCTP deaminase (183 aa).

Position 106 to 111 (106 to 111 (KSTYAR)) interacts with dCTP. The active-site Proton donor/acceptor is Glu-132. DCTP is bound by residues Gln-151, Tyr-165, and Gln-175.

Belongs to the dCTP deaminase family. As to quaternary structure, homotrimer.

The catalysed reaction is dCTP + H2O + H(+) = dUTP + NH4(+). It participates in pyrimidine metabolism; dUMP biosynthesis; dUMP from dCTP (dUTP route): step 1/2. Functionally, catalyzes the deamination of dCTP to dUTP. This chain is dCTP deaminase, found in Gluconobacter oxydans (strain 621H) (Gluconobacter suboxydans).